We begin with the raw amino-acid sequence, 192 residues long: uncharacterized protein (192 aa).

Residues phenylalanine 7–phenylalanine 29 form a helical; Signal-anchor membrane-spanning segment. A helical transmembrane segment spans residues tyrosine 51 to isoleucine 67.

It is found in the membrane. This is an uncharacterized protein from Saccharomyces cerevisiae (strain ATCC 204508 / S288c) (Baker's yeast).